The sequence spans 292 residues: Elongation factor Ts (292 aa).

The involved in Mg(2+) ion dislocation from EF-Tu stretch occupies residues 82–85 (TDFV).

This sequence belongs to the EF-Ts family.

It localises to the cytoplasm. Functionally, associates with the EF-Tu.GDP complex and induces the exchange of GDP to GTP. It remains bound to the aminoacyl-tRNA.EF-Tu.GTP complex up to the GTP hydrolysis stage on the ribosome. The chain is Elongation factor Ts from Bordetella bronchiseptica (strain ATCC BAA-588 / NCTC 13252 / RB50) (Alcaligenes bronchisepticus).